Consider the following 214-residue polypeptide: MRIMLLGAPGAGKGTQAQFIMEKYGIPQISTGDMLRAAVKAGTPLGLEAKKVMDAGQLVSDELIIGLVKERVAQADCEKGFLLDGFPRTIPQADAMADAGIAIDHVVEIDVPDEEIVKRMSGRRVHPGSGRVYHIVFNQPKVEGKDDVTGEDLAIRPDDEESTVRKRLDIYHEQTKPLVEYYGNVAANGQTKYSKFDGTQSVASVSEEIVVALS.

10–15 (GAGKGT) is a binding site for ATP. The NMP stretch occupies residues 30–59 (STGDMLRAAVKAGTPLGLEAKKVMDAGQLV). AMP-binding positions include Thr31, Arg36, 57–59 (QLV), 85–88 (GFPR), and Gln92. Residues 122-159 (GRRVHPGSGRVYHIVFNQPKVEGKDDVTGEDLAIRPDD) are LID. ATP is bound by residues Arg123 and 132 to 133 (VY). Arg156 and Arg167 together coordinate AMP. Gln200 provides a ligand contact to ATP.

Belongs to the adenylate kinase family. As to quaternary structure, monomer.

The protein resides in the cytoplasm. It carries out the reaction AMP + ATP = 2 ADP. It functions in the pathway purine metabolism; AMP biosynthesis via salvage pathway; AMP from ADP: step 1/1. Its function is as follows. Catalyzes the reversible transfer of the terminal phosphate group between ATP and AMP. Plays an important role in cellular energy homeostasis and in adenine nucleotide metabolism. This is Adenylate kinase from Shewanella woodyi (strain ATCC 51908 / MS32).